Here is a 211-residue protein sequence, read N- to C-terminus: tRNA (guanine-N(7)-)-methyltransferase (211 aa).

S-adenosyl-L-methionine is bound by residues Glu44, Asp69, Asp96, and Asp118. Asp118 is a catalytic residue. Lys122 is a substrate binding site. Residues 124–129 (RHEKRR) form an interaction with RNA region. Substrate contacts are provided by residues Asp154 and 191 to 194 (TEYE).

It belongs to the class I-like SAM-binding methyltransferase superfamily. TrmB family.

It catalyses the reaction guanosine(46) in tRNA + S-adenosyl-L-methionine = N(7)-methylguanosine(46) in tRNA + S-adenosyl-L-homocysteine. Its pathway is tRNA modification; N(7)-methylguanine-tRNA biosynthesis. Catalyzes the formation of N(7)-methylguanine at position 46 (m7G46) in tRNA. The polypeptide is tRNA (guanine-N(7)-)-methyltransferase (Streptococcus equi subsp. equi (strain 4047)).